The following is a 288-amino-acid chain: Pantothenate synthetase (288 aa).

Residue 35 to 42 (MGALHDGH) coordinates ATP. Histidine 42 (proton donor) is an active-site residue. Glutamine 66 contributes to the (R)-pantoate binding site. A beta-alanine-binding site is contributed by glutamine 66. 152–155 (GEKD) lines the ATP pocket. Glutamine 158 serves as a coordination point for (R)-pantoate. ATP is bound by residues glycine 181 and 189–192 (LSSR).

This sequence belongs to the pantothenate synthetase family. Homodimer.

Its subcellular location is the cytoplasm. The enzyme catalyses (R)-pantoate + beta-alanine + ATP = (R)-pantothenate + AMP + diphosphate + H(+). It participates in cofactor biosynthesis; (R)-pantothenate biosynthesis; (R)-pantothenate from (R)-pantoate and beta-alanine: step 1/1. Functionally, catalyzes the condensation of pantoate with beta-alanine in an ATP-dependent reaction via a pantoyl-adenylate intermediate. The chain is Pantothenate synthetase from Maricaulis maris (strain MCS10) (Caulobacter maris).